The primary structure comprises 328 residues: DNA-directed RNA polymerase subunit alpha (328 aa).

An alpha N-terminal domain (alpha-NTD) region spans residues 1 to 232 (MSTQGFLKPR…DQISVFAALE (232 aa)). An alpha C-terminal domain (alpha-CTD) region spans residues 248–328 (IDPVLLRPVD…NWPPLGLERP (81 aa)).

Belongs to the RNA polymerase alpha chain family. As to quaternary structure, homodimer. The RNAP catalytic core consists of 2 alpha, 1 beta, 1 beta' and 1 omega subunit. When a sigma factor is associated with the core the holoenzyme is formed, which can initiate transcription.

The enzyme catalyses RNA(n) + a ribonucleoside 5'-triphosphate = RNA(n+1) + diphosphate. DNA-dependent RNA polymerase catalyzes the transcription of DNA into RNA using the four ribonucleoside triphosphates as substrates. This Bordetella avium (strain 197N) protein is DNA-directed RNA polymerase subunit alpha.